The sequence spans 500 residues: Cytochrome P450 11B2, mitochondrial (500 aa).

The N-terminal 24 residues, 1 to 24 (MALRAKADVWLARPWQCLPRTRAL), are a transit peptide targeting the mitochondrion. Phenylalanine 381 provides a ligand contact to 21-hydroxyprogesterone. Cysteine 447 contributes to the heme binding site.

The protein belongs to the cytochrome P450 family. Requires heme as cofactor. Adrenal gland.

It is found in the mitochondrion inner membrane. It catalyses the reaction a steroid + 2 reduced [adrenodoxin] + O2 + 2 H(+) = an 11beta-hydroxysteroid + 2 oxidized [adrenodoxin] + H2O. The enzyme catalyses 21-hydroxyprogesterone + 2 reduced [adrenodoxin] + O2 + 2 H(+) = corticosterone + 2 oxidized [adrenodoxin] + H2O. The catalysed reaction is corticosterone + 2 reduced [adrenodoxin] + O2 + 2 H(+) = 18-hydroxycorticosterone + 2 oxidized [adrenodoxin] + H2O. It carries out the reaction 18-hydroxycorticosterone + 2 reduced [adrenodoxin] + O2 + 2 H(+) = aldosterone + 2 oxidized [adrenodoxin] + 2 H2O. It catalyses the reaction 11-deoxycortisol + 2 reduced [adrenodoxin] + O2 + 2 H(+) = cortisol + 2 oxidized [adrenodoxin] + H2O. The enzyme catalyses 21-hydroxyprogesterone + 2 reduced [adrenodoxin] + O2 + 2 H(+) = 18-hydroxy-11-deoxycorticosterone + 2 oxidized [adrenodoxin] + H2O. The catalysed reaction is cortisol + 2 reduced [adrenodoxin] + O2 + 2 H(+) = 18-hydroxycortisol + 2 oxidized [adrenodoxin] + H2O. It carries out the reaction 18-hydroxycortisol + 2 reduced [adrenodoxin] + O2 + 2 H(+) = 18-oxocortisol + 2 oxidized [adrenodoxin] + 2 H2O. It functions in the pathway steroid biosynthesis. In terms of biological role, a cytochrome P450 monooxygenase that catalyzes the biosynthesis of aldosterone, the main mineralocorticoid in the human body responsible for salt and water homeostasis, thus involved in blood pressure regulation, arterial hypertension, and the development of heart failure. Catalyzes three sequential oxidative reactions of 11-deoxycorticosterone (21-hydroxyprogesterone), namely 11-beta hydroxylation, followed by two successive oxidations at C18 yielding 18-hydroxy and then 18-oxo intermediates (that would not leave the enzyme active site during the consecutive hydroxylation reactions), ending with the formation of aldosterone. Can also produce 18-hydroxycortisol and 18-oxocortisol, derived from successive oxidations of cortisol at C18, normally found at very low levels, but significantly increased in primary aldosteronism, the most common form of secondary hypertension. Mechanistically, uses molecular oxygen inserting one oxygen atom into a substrate and reducing the second into a water molecule. Two electrons are provided by NADPH via a two-protein mitochondrial transfer system comprising flavoprotein FDXR (adrenodoxin/ferredoxin reductase) and nonheme iron-sulfur protein FDX1 or FDX2 (adrenodoxin/ferredoxin). Could also be involved in the androgen metabolic pathway. In Mesocricetus auratus (Golden hamster), this protein is Cytochrome P450 11B2, mitochondrial (CYP11B2).